The sequence spans 264 residues: Apolipoprotein A-I (264 aa).

Positions 1–18 (MKAVVLTVAVLFLTGSQA) are cleaved as a signal peptide. 2 tandem repeats follow at residues 67-88 (LKLL…EQIG) and 89-110 (PVSQ…QEMN). A 10 X approximate tandem repeats region spans residues 67–264 (LKLLDNWDSL…DEATKKLNTQ (198 aa)). A Methionine sulfoxide modification is found at methionine 109. Residues 111–121 (KDLEEVKRKVQ) form a 3; half-length repeat. 3 tandem repeats follow at residues 122–143 (PYLD…QQVE), 144–165 (PLSK…EKLS), and 166–187 (PLGQ…THLA). One copy of the 7; truncated repeat lies at 188 to 207 (PYSDELRQRLAARLEALKEG). The stretch at 208-229 (SSFAEYQAKATEHLSALGEKAK) is repeat 8. One copy of the 9; half-length repeat lies at 230–240 (PALEDLRQGLL). Copy 10 of the repeat occupies 241 to 264 (PVLESLKLSFWSAVDEATKKLNTQ).

It belongs to the apolipoprotein A1/A4/E family. In terms of assembly, homodimer. Interacts with APOA1BP and CLU. Component of a sperm activating protein complex (SPAP), consisting of APOA1, an immunoglobulin heavy chain, an immunoglobulin light chain and albumin. Interacts with NDRG1. Interacts with SCGB3A2. Interacts with NAXE and YJEFN3. Post-translationally, glycosylated. In terms of processing, palmitoylated. Phosphorylation sites are present in the extracellular medium.

It localises to the secreted. Functionally, participates in the reverse transport of cholesterol from tissues to the liver for excretion by promoting cholesterol efflux from tissues and by acting as a cofactor for the lecithin cholesterol acyltransferase (LCAT). As part of the SPAP complex, activates spermatozoa motility. This chain is Apolipoprotein A-I (APOA1), found in Ictidomys tridecemlineatus (Thirteen-lined ground squirrel).